A 145-amino-acid polypeptide reads, in one-letter code: Protein AggB (145 aa).

Positions 1 to 24 are cleaved as a signal peptide; it reads MLKKSILPMSCGVLVMVMSGLLDA.

To E.coli AfaD.

This is Protein AggB (aggB) from Escherichia coli.